A 303-amino-acid polypeptide reads, in one-letter code: tRNA pseudouridine synthase B (303 aa).

The active-site Nucleophile is the Asp47.

This sequence belongs to the pseudouridine synthase TruB family. Type 1 subfamily.

It carries out the reaction uridine(55) in tRNA = pseudouridine(55) in tRNA. In terms of biological role, responsible for synthesis of pseudouridine from uracil-55 in the psi GC loop of transfer RNAs. This chain is tRNA pseudouridine synthase B, found in Ruegeria pomeroyi (strain ATCC 700808 / DSM 15171 / DSS-3) (Silicibacter pomeroyi).